The chain runs to 121 residues: uncharacterized protein (121 aa).

It to M.jannaschii MJ0989.

This is an uncharacterized protein from Methanopyrus kandleri (strain AV19 / DSM 6324 / JCM 9639 / NBRC 100938).